A 332-amino-acid chain; its full sequence is Nucleoid-associated protein VIBHAR_03026 (332 aa).

The protein belongs to the YejK family.

It localises to the cytoplasm. The protein localises to the nucleoid. The chain is Nucleoid-associated protein VIBHAR_03026 from Vibrio campbellii (strain ATCC BAA-1116).